Here is a 65-residue protein sequence, read N- to C-terminus: U11-theraphotoxin-Cg1a (65 aa).

Residues Met-1–Ala-21 form the signal peptide. A propeptide spanning residues Thr-22–Arg-29 is cleaved from the precursor. 3 disulfides stabilise this stretch: Cys-31/Cys-45, Cys-38/Cys-50, and Cys-44/Cys-57.

The protein belongs to the neurotoxin 10 (Hwtx-1) family. 32 (Jztx-16) subfamily. In terms of tissue distribution, expressed by the venom gland.

The protein localises to the secreted. Functionally, probable ion channel inhibitor. This Chilobrachys guangxiensis (Chinese earth tiger tarantula) protein is U11-theraphotoxin-Cg1a.